Reading from the N-terminus, the 29-residue chain is Serum amyloid P-component (29 aa).

One can recognise a Pentraxin (PTX) domain in the interval leucine 6–glutamate 29.

It belongs to the pentraxin family. Homopentamer. Pentraxin (or pentaxin) have a discoid arrangement of 5 non-covalently bound subunits. It depends on Ca(2+) as a cofactor.

It localises to the secreted. This Hippoglossus hippoglossus (Atlantic halibut) protein is Serum amyloid P-component.